Reading from the N-terminus, the 160-residue chain is SsrA-binding protein (160 aa).

Residues 132 to 160 are disordered; it reads KEFDKRDTMRERDSNRELQRAVRNKGKEE.

The protein belongs to the SmpB family.

Its subcellular location is the cytoplasm. Functionally, required for rescue of stalled ribosomes mediated by trans-translation. Binds to transfer-messenger RNA (tmRNA), required for stable association of tmRNA with ribosomes. tmRNA and SmpB together mimic tRNA shape, replacing the anticodon stem-loop with SmpB. tmRNA is encoded by the ssrA gene; the 2 termini fold to resemble tRNA(Ala) and it encodes a 'tag peptide', a short internal open reading frame. During trans-translation Ala-aminoacylated tmRNA acts like a tRNA, entering the A-site of stalled ribosomes, displacing the stalled mRNA. The ribosome then switches to translate the ORF on the tmRNA; the nascent peptide is terminated with the 'tag peptide' encoded by the tmRNA and targeted for degradation. The ribosome is freed to recommence translation, which seems to be the essential function of trans-translation. This Pseudomonas putida (strain ATCC 47054 / DSM 6125 / CFBP 8728 / NCIMB 11950 / KT2440) protein is SsrA-binding protein.